The primary structure comprises 347 residues: MSFVLSRMAACGGTCKNKVTVSKPVWDFLSKETPARLARLREEHRVSILIDGETSDIYVLQLSPQGPPPAPPNGLYLARKALKGLLKEAEKELKKAQRQGELMGCLALGGGGEHPEMHRAGPPPLRAAPLLPPGARGLPPPPPPLPPPLPPRLREEAEEQESTCPICLGEIQNAKTLEKCRHSFCEGCITRALQVKKACPMCGRFYGQLVGNQPQNGRMLVSKDATLLLPSYEKYGTIVIQYVFPPGVQGAEHPNPGVRYPGTTRVAYLPDCPEGNKVLTLFRKAFDQRLTFTIGTSMTTGRPNVITWNDIHHKTSCTGGPQLFGYPDPTYLTRVQEELRAKGITDD.

Residues 113-157 form a disordered region; the sequence is EHPEMHRAGPPPLRAAPLLPPGARGLPPPPPPLPPPLPPRLREEA. Positions 121–151 are enriched in pro residues; the sequence is GPPPLRAAPLLPPGARGLPPPPPPLPPPLPP. The RING-type zinc finger occupies 164-205; the sequence is CPICLGEIQNAKTLEKCRHSFCEGCITRALQVKKACPMCGRF.

Belongs to the Deltex family. In terms of assembly, homodimer. May form a heterodimers with other members of the Deltex family. Interacts with NOTCH1.

The protein localises to the cytoplasm. It catalyses the reaction S-ubiquitinyl-[E2 ubiquitin-conjugating enzyme]-L-cysteine + [acceptor protein]-L-lysine = [E2 ubiquitin-conjugating enzyme]-L-cysteine + N(6)-ubiquitinyl-[acceptor protein]-L-lysine.. Its pathway is protein modification; protein ubiquitination. Its function is as follows. Regulator of Notch signaling, a signaling pathway involved in cell-cell communications that regulates a broad spectrum of cell-fate determinations. Probably acts both as a positive and negative regulator of Notch, depending on the developmental and cell context. Functions as an ubiquitin ligase protein in vitro, suggesting that it may regulate the Notch pathway via some ubiquitin ligase activity. The polypeptide is Probable E3 ubiquitin-protein ligase DTX3 (DTX3) (Homo sapiens (Human)).